The chain runs to 314 residues: Thymidylate synthase (314 aa).

DUMP is bound by residues arginine 21 and 176-177 (RR). Cysteine 196 acts as the Nucleophile in catalysis. Residues 216-219 (RSAD), asparagine 227, and 257-259 (HLY) contribute to the dUMP site. Residue aspartate 219 coordinates (6R)-5,10-methylene-5,6,7,8-tetrahydrofolate. Serine 313 is a (6R)-5,10-methylene-5,6,7,8-tetrahydrofolate binding site.

Belongs to the thymidylate synthase family. Bacterial-type ThyA subfamily. Homodimer.

It localises to the cytoplasm. The enzyme catalyses dUMP + (6R)-5,10-methylene-5,6,7,8-tetrahydrofolate = 7,8-dihydrofolate + dTMP. It participates in pyrimidine metabolism; dTTP biosynthesis. Functionally, catalyzes the reductive methylation of 2'-deoxyuridine-5'-monophosphate (dUMP) to 2'-deoxythymidine-5'-monophosphate (dTMP) while utilizing 5,10-methylenetetrahydrofolate (mTHF) as the methyl donor and reductant in the reaction, yielding dihydrofolate (DHF) as a by-product. This enzymatic reaction provides an intracellular de novo source of dTMP, an essential precursor for DNA biosynthesis. The polypeptide is Thymidylate synthase (Listeria monocytogenes serotype 4b (strain F2365)).